The primary structure comprises 29 residues: GKPTCGETCFKGKCYTPGCTCSYPLCKKD.

Residues 1 to 29 (GKPTCGETCFKGKCYTPGCTCSYPLCKKD) constitute a cross-link (cyclopeptide (Gly-Asp)). Cystine bridges form between Cys-5–Cys-19, Cys-9–Cys-21, and Cys-14–Cys-26.

In terms of processing, this is a cyclic peptide. Contains 3 disulfide bonds.

Probably participates in a plant defense mechanism (Potential). Binds to and induces leakage in phospholipd membranes, particularly ones containing 1-palmitoyl-2-oleophosphatidylethanolamine (POPE). In vitro, displays cytotoxicity against cultured cells but no hemolytic activity towards fresh erythrocytes. Not active against Gram-negative bacterium E.coli ATCC 25922 or Gram-positive bacterium S.aureus ATCC 25923 up to a concentration of 64 uM. The chain is Cyclotide mela-2 from Melicytus latifolius (Norfolk Island mahoe).